The following is a 188-amino-acid chain: Ion-translocating oxidoreductase complex subunit G (188 aa).

Residues 1 to 9 are Cytoplasmic-facing; the sequence is MSDSKEITK. A helical membrane pass occupies residues 10–30; sequence VIVTMVVISAVAAALLALTYT. Topologically, residues 31–188 are extracellular; that stretch reads PTQAQLKLLQ…AVDYVSAQEG (158 aa). The residue at position 166 (threonine 166) is an FMN phosphoryl threonine.

Belongs to the RnfG family. In terms of assembly, the Rnf complex is probably composed of eight subunits, including RnfA, RnfB, RnfC, RnfD, RnfE and RnfG. It depends on FMN as a cofactor.

It localises to the cell membrane. Part of a membrane-bound complex that couples electron transfer with translocation of ions across the membrane. Catalyzes Na(+) transport, most probably coupled to electron transfer from reduced ferredoxin to methanophenazine and heterodisulfide reductase. Involved in heterodisulfide reduction during methanogenesis from acetate. In Methanosarcina acetivorans (strain ATCC 35395 / DSM 2834 / JCM 12185 / C2A), this protein is Ion-translocating oxidoreductase complex subunit G.